A 111-amino-acid polypeptide reads, in one-letter code: UPF0122 protein LACR_1522 (111 aa).

It belongs to the UPF0122 family.

In terms of biological role, might take part in the signal recognition particle (SRP) pathway. This is inferred from the conservation of its genetic proximity to ftsY/ffh. May be a regulatory protein. The chain is UPF0122 protein LACR_1522 from Lactococcus lactis subsp. cremoris (strain SK11).